We begin with the raw amino-acid sequence, 118 residues long: Cell division protein SepF (118 aa).

Positions 1–12 (MGIMSKILGGGG) are important for localization in a ring-like structure at midcell.

Homodimer. Does not oligomerize. Interacts with FtsZ2.

It localises to the cytoplasm. In terms of biological role, involved in cell division. Probably acts as a membrane anchor for FstZ2, tethering its filaments to the division site. May be involved in septum closure. This is Cell division protein SepF from Haloferax volcanii (strain ATCC 29605 / DSM 3757 / JCM 8879 / NBRC 14742 / NCIMB 2012 / VKM B-1768 / DS2) (Halobacterium volcanii).